Reading from the N-terminus, the 613-residue chain is Chaperone protein DnaK (613 aa).

The residue at position 173 (T173) is a Phosphothreonine; by autocatalysis. Residues 577–613 (AKQAQAQQEGGAEGAQKADDNVVDAEYEEVNDDQEKK) are disordered. The segment covering 597–613 (NVVDAEYEEVNDDQEKK) has biased composition (acidic residues).

It belongs to the heat shock protein 70 family.

Its function is as follows. Acts as a chaperone. This chain is Chaperone protein DnaK, found in Bacillus pumilus (strain SAFR-032).